The following is a 131-amino-acid chain: MEPEYLSAIKNNDYTKAINELEKISNNDFFGKIRKINYDDLDSLDKFLDLPNIESINDIDVLKKYYQICVQKIKDFETEKDFMFEAIKLIDNKKVSISKILKKLFIICMFITNHIQDKIQECENKLDNKNI.

This is an uncharacterized protein from Acanthamoeba polyphaga (Amoeba).